The sequence spans 117 residues: Large ribosomal subunit protein bL20 (117 aa).

This sequence belongs to the bacterial ribosomal protein bL20 family.

In terms of biological role, binds directly to 23S ribosomal RNA and is necessary for the in vitro assembly process of the 50S ribosomal subunit. It is not involved in the protein synthesizing functions of that subunit. The protein is Large ribosomal subunit protein bL20 of Aliivibrio salmonicida (strain LFI1238) (Vibrio salmonicida (strain LFI1238)).